The chain runs to 364 residues: MAQQTPLYEQHTLCGARMVDFHGWMMPLHYGSQIDEHHAVRGDAGMFDVSHMTIVDFHGSRIREFLRYLLANDVAKLTTPGKALYTGMLTASAGVIDDLIVYFLSEDYFRLVVNSATREKDLAWISEQAEPYGLEITVRDDLSLIAVQGPQAKAKAATLFTDAQRQAVEGMKPFFGVQAGDLFIATTGYTGEAGYEIVMPNEQAADFWRGLLDAGVKPCGLGARDTLRLEAGMNLYGQEMDEGVSPLAANMGWTIAWEPADRNFIGREALEMQREKGTEQLVGLVMTEKGVLRGGLPVRFTDSDGNQKEGIITSGTFSPTLGYSIALARVPAGIGDTAVVQIRNREMPVKVTKPGFVRNGKAIV.

The protein belongs to the GcvT family. In terms of assembly, the glycine cleavage system is composed of four proteins: P, T, L and H.

It carries out the reaction N(6)-[(R)-S(8)-aminomethyldihydrolipoyl]-L-lysyl-[protein] + (6S)-5,6,7,8-tetrahydrofolate = N(6)-[(R)-dihydrolipoyl]-L-lysyl-[protein] + (6R)-5,10-methylene-5,6,7,8-tetrahydrofolate + NH4(+). Its function is as follows. The glycine cleavage system catalyzes the degradation of glycine. In Klebsiella pneumoniae subsp. pneumoniae (strain ATCC 700721 / MGH 78578), this protein is Aminomethyltransferase.